Reading from the N-terminus, the 217-residue chain is Ribosomal RNA large subunit methyltransferase E (217 aa).

Positions 71, 73, 91, 107, and 132 each coordinate S-adenosyl-L-methionine. K172 (proton acceptor) is an active-site residue.

It belongs to the class I-like SAM-binding methyltransferase superfamily. RNA methyltransferase RlmE family.

The protein localises to the cytoplasm. The enzyme catalyses uridine(2552) in 23S rRNA + S-adenosyl-L-methionine = 2'-O-methyluridine(2552) in 23S rRNA + S-adenosyl-L-homocysteine + H(+). Its function is as follows. Specifically methylates the uridine in position 2552 of 23S rRNA at the 2'-O position of the ribose in the fully assembled 50S ribosomal subunit. The polypeptide is Ribosomal RNA large subunit methyltransferase E (Psychromonas ingrahamii (strain DSM 17664 / CCUG 51855 / 37)).